The primary structure comprises 392 residues: MGVVTKKILILGSTGSIGTQALDVIADNSDKFEVVGIAAGGSQPDLVISQAQQLGLAADKVAVADAQAAAVISKALGGEIISGTDAAKILVETTKADTVLNALVGSLGLAATLATLESGAHLALANKESLVAGGEFVTSKAKLGQIIPVDSEHSAMAQCLRSGTRDEVARIVLTASGGPFRGWTREKMWEVTPEQAAAHPTWAMGQMNTLNSATLINKGLELIEATLLFETDADLIDVTVHPQSIIHSMITFTDGATIAQASPPSMKLPIALALDWPHRVPKAQPALDFTAAHTWAFEPVDDAAFPAVQLARHVAKQKGTYPAVYNAANEEAAEAFLRGRIKFPQIVDVVDEVLQGASQFAGVASHVDDILATESEARARANALINRLATNL.

NADPH contacts are provided by threonine 14, glycine 15, serine 16, isoleucine 17, glycine 40, glutamine 43, and asparagine 126. Residue lysine 127 participates in 1-deoxy-D-xylulose 5-phosphate binding. Residue glutamate 128 participates in NADPH binding. Position 150 (aspartate 150) interacts with Mn(2+). 4 residues coordinate 1-deoxy-D-xylulose 5-phosphate: serine 151, glutamate 152, serine 176, and histidine 199. Glutamate 152 contacts Mn(2+). Glycine 205 contacts NADPH. Residues serine 212, asparagine 217, lysine 218, and glutamate 221 each contribute to the 1-deoxy-D-xylulose 5-phosphate site. Residue glutamate 221 participates in Mn(2+) binding.

It belongs to the DXR family. Requires Mg(2+) as cofactor. Mn(2+) serves as cofactor.

The catalysed reaction is 2-C-methyl-D-erythritol 4-phosphate + NADP(+) = 1-deoxy-D-xylulose 5-phosphate + NADPH + H(+). Its pathway is isoprenoid biosynthesis; isopentenyl diphosphate biosynthesis via DXP pathway; isopentenyl diphosphate from 1-deoxy-D-xylulose 5-phosphate: step 1/6. In terms of biological role, catalyzes the NADPH-dependent rearrangement and reduction of 1-deoxy-D-xylulose-5-phosphate (DXP) to 2-C-methyl-D-erythritol 4-phosphate (MEP). The chain is 1-deoxy-D-xylulose 5-phosphate reductoisomerase from Corynebacterium glutamicum (strain ATCC 13032 / DSM 20300 / JCM 1318 / BCRC 11384 / CCUG 27702 / LMG 3730 / NBRC 12168 / NCIMB 10025 / NRRL B-2784 / 534).